The primary structure comprises 195 residues: Xanthine phosphoribosyltransferase (195 aa).

2 residues coordinate xanthine: L20 and N27. 5-phospho-alpha-D-ribose 1-diphosphate is bound at residue 128-132 (ANGQA). K156 is a xanthine binding site.

It belongs to the purine/pyrimidine phosphoribosyltransferase family. Xpt subfamily. In terms of assembly, homodimer.

It is found in the cytoplasm. It carries out the reaction XMP + diphosphate = xanthine + 5-phospho-alpha-D-ribose 1-diphosphate. The protein operates within purine metabolism; XMP biosynthesis via salvage pathway; XMP from xanthine: step 1/1. Converts the preformed base xanthine, a product of nucleic acid breakdown, to xanthosine 5'-monophosphate (XMP), so it can be reused for RNA or DNA synthesis. In Latilactobacillus sakei subsp. sakei (strain 23K) (Lactobacillus sakei subsp. sakei), this protein is Xanthine phosphoribosyltransferase.